A 39-amino-acid polypeptide reads, in one-letter code: QQHADPICNKPCKTHDDCSGAWFCQACWNSARTCGPYVG.

A Pyrrolidone carboxylic acid modification is found at Q1. Disulfide bonds link C8-C24, C12-C27, and C18-C34.

As to expression, highly concentrated in tubers. Closely related but distinct forms of MCPI are present in leaves, stems and buds.

May play a defensive role against insect attacks. Inhibits A.aegypti carboxypeptidase CPB1. The protein is Metallocarboxypeptidase inhibitor of Solanum tuberosum (Potato).